The primary structure comprises 248 residues: MEKIVCIIPSRYSSSRFQGKPLADLCGKPMIQHVYERVLKSELVSYAAVATDDSRIFEAVRKFGGKAIMTAARHRSGTDRIAEAVNSLDLKDDDIVVNVQGDQPIFEPEQIAEVTRPLREDPSLPMATLIYRIVREEEITHPNAVKVVFDRNFNALYFSRATIPYVRDDRHPIAYYKHHGIYAYRRAFLRTFTALEEGTMERLESLEQLRALEFGYRIRVVETLHDSVEVDTPEELARVRDILLGRAR.

Belongs to the KdsB family.

It localises to the cytoplasm. The catalysed reaction is 3-deoxy-alpha-D-manno-oct-2-ulosonate + CTP = CMP-3-deoxy-beta-D-manno-octulosonate + diphosphate. The protein operates within nucleotide-sugar biosynthesis; CMP-3-deoxy-D-manno-octulosonate biosynthesis; CMP-3-deoxy-D-manno-octulosonate from 3-deoxy-D-manno-octulosonate and CTP: step 1/1. Its pathway is bacterial outer membrane biogenesis; lipopolysaccharide biosynthesis. In terms of biological role, activates KDO (a required 8-carbon sugar) for incorporation into bacterial lipopolysaccharide in Gram-negative bacteria. The sequence is that of 3-deoxy-manno-octulosonate cytidylyltransferase from Syntrophus aciditrophicus (strain SB).